A 264-amino-acid polypeptide reads, in one-letter code: Osteopontin (264 aa).

The first 16 residues, 1-16 (MKLAFLCLCFISIAAA), serve as a signal peptide directing secretion. 2 disordered regions span residues 21–141 (KSRQ…RGDS) and 166–264 (IEDD…EVTR). The segment covering 31–51 (SEEKYDPRSHHTHRYHQDHVD) has biased composition (basic and acidic residues). Residues 52–73 (SQSQEHLQQTQNDLASLQQTHY) are compositionally biased toward polar residues. Residues 97-118 (AVDDDDDDDNDSNDTDESDEVV) are compositionally biased toward acidic residues. N-linked (GlcNAc...) asparagine glycosylation is found at Asn106 and Asn109. The Cell attachment site signature appears at 132–134 (RGD). Positions 186–212 (KESREQDSRELAQHQSVENDSRPRFDS) are enriched in basic and acidic residues. Asn204 and Asn242 each carry an N-linked (GlcNAc...) asparagine glycan. The span at 233 to 246 (ASRSAVDTSNQTLE) shows a compositional bias: polar residues. Positions 252-264 (EDRHSIENNEVTR) are enriched in basic and acidic residues.

This sequence belongs to the osteopontin family. In terms of processing, extensively phosphorylated on serine residues.

It localises to the secreted. Functionally, major non-collagenous bone protein that binds tightly to hydroxyapatite. Appears to form an integral part of the mineralized matrix. Probably important to cell-matrix interaction. Its function is as follows. Acts as a cytokine involved in enhancing production of interferon-gamma and interleukin-12 and reducing production of interleukin-10 and is essential in the pathway that leads to type I immunity. This chain is Osteopontin (SPP1), found in Gallus gallus (Chicken).